Here is a 188-residue protein sequence, read N- to C-terminus: Pyridoxal 5'-phosphate synthase subunit PdxT (188 aa).

46–48 (GES) is an L-glutamine binding site. Cys78 acts as the Nucleophile in catalysis. L-glutamine-binding positions include Arg105 and 133 to 134 (IR). Residues His169 and Glu171 each act as charge relay system in the active site.

This sequence belongs to the glutaminase PdxT/SNO family. In terms of assembly, in the presence of PdxS, forms a dodecamer of heterodimers. Only shows activity in the heterodimer.

The catalysed reaction is aldehydo-D-ribose 5-phosphate + D-glyceraldehyde 3-phosphate + L-glutamine = pyridoxal 5'-phosphate + L-glutamate + phosphate + 3 H2O + H(+). It catalyses the reaction L-glutamine + H2O = L-glutamate + NH4(+). Its pathway is cofactor biosynthesis; pyridoxal 5'-phosphate biosynthesis. Catalyzes the hydrolysis of glutamine to glutamate and ammonia as part of the biosynthesis of pyridoxal 5'-phosphate. The resulting ammonia molecule is channeled to the active site of PdxS. The chain is Pyridoxal 5'-phosphate synthase subunit PdxT from Thermosipho africanus (strain TCF52B).